We begin with the raw amino-acid sequence, 210 residues long: DNA-directed RNA polymerases I, II, and III subunit RPABC1 (210 aa).

Met-1 bears the N-acetylmethionine mark. Residue Lys-81 forms a Glycyl lysine isopeptide (Lys-Gly) (interchain with G-Cter in SUMO2) linkage.

It belongs to the archaeal Rpo5/eukaryotic RPB5 RNA polymerase subunit family. Component of the RNA polymerase I (Pol I), RNA polymerase II (Pol II) and RNA polymerase III (Pol III) complexes consisting of at least 13, 12 and 17 subunits, respectively. Pol I complex consists of a ten-subunit catalytic core composed of POLR1A/RPA1, POLR1B/RPA2, POLR1C/RPAC1, POLR1D/RPAC2, POLR1H/RPA12, POLR2E/RPABC1, POLR2F/RPABC2, POLR2H/RPABC3, POLR2K/RPABC4 and POLR2L/RPABC5; a mobile stalk subunit POLR1F/RPA43 protruding from the core and additional subunits homologous to general transcription factors POLR1E/RPA49 and POLR1G/RPA34. Part of Pol I pre-initiation complex (PIC), in which Pol I core assembles with RRN3 and promoter-bound UTBF and SL1/TIF-IB complex. Pol II complex contains a ten-subunit catalytic core composed of POLR2A/RPB1, POLR2B/RPB2, POLR2C/RPB3, POLR2I/RPB9, POLR2J/RPB11, POLR2E/RPABC1, POLR2F/RPABC2, POLR2H/RPABC3, POLR2K/RPABC4 and POLR2L/RPABC5 and a mobile stalk composed of two subunits POLR2D/RPB4 and POLR2G/RPB7. Part of Pol II(G) complex, in which Pol II core associates with an additional subunit POLR2M; unlike conventional Pol II, Pol II(G) functions as a transcriptional repressor. Part of TBP-based Pol II pre-initiation complex (PIC), in which Pol II core assembles with general transcription factors and other specific initiation factors including GTF2E1, GTF2E2, GTF2F1, GTF2F2, TCEA1, ERCC2, ERCC3, GTF2H2, GTF2H3, GTF2H4, GTF2H5, GTF2A1, GTF2A2, GTF2B and TBP; this large multi-subunit PIC complex mediates DNA unwinding and targets Pol II core to the transcription start site where the first phosphodiester bond forms. In Pol II complex, this subunit is present in 2-fold molar excess over the other subunits. Pol III complex consists of a ten-subunit catalytic core composed of POLR3A/RPC1, POLR3B/RPC2, POLR1C/RPAC1, POLR1D/RPAC2, POLR3K/RPC10, POLR2E/RPABC1, POLR2F/RPABC2, POLR2H/RPABC3, POLR2K/RPABC4 and POLR2L/RPABC5; a mobile stalk composed of two subunits POLR3H/RPC8 and CRCP/RPC9, protruding from the core and functioning primarily in transcription initiation; and additional subunits homologous to general transcription factors of the RNA polymerase II machinery, POLR3C/RPC3-POLR3F/RPC6-POLR3G/RPC7 heterotrimer required for transcription initiation and POLR3D/RPC4-POLR3E/RPC5 heterodimer involved in both transcription initiation and termination. Component of the PAQosome complex which is responsible for the biogenesis of several protein complexes and which consists of R2TP complex members RUVBL1, RUVBL2, RPAP3 and PIH1D1, URI complex members PFDN2, PFDN6, PDRG1, UXT and URI1 as well as ASDURF, POLR2E and DNAAF10/WDR92. Interacts with URI1.

The protein resides in the nucleus. Its subcellular location is the nucleolus. Its function is as follows. DNA-dependent RNA polymerase catalyzes the transcription of DNA into RNA using the four ribonucleoside triphosphates as substrates. Common component of RNA polymerases I, II and III which synthesize ribosomal RNA precursors, mRNA precursors and many functional non-coding RNAs, and small RNAs, such as 5S rRNA and tRNAs, respectively. Pol II is the central component of the basal RNA polymerase II transcription machinery. Pols are composed of mobile elements that move relative to each other. In Pol II, POLR2E/RPABC1 is part of the lower jaw surrounding the central large cleft and thought to grab the incoming DNA template. Seems to be the major component in this process. The protein is DNA-directed RNA polymerases I, II, and III subunit RPABC1 of Mus musculus (Mouse).